The chain runs to 235 residues: Large ribosomal subunit protein uL1 (235 aa).

It belongs to the universal ribosomal protein uL1 family. In terms of assembly, part of the 50S ribosomal subunit.

Functionally, binds directly to 23S rRNA. The L1 stalk is quite mobile in the ribosome, and is involved in E site tRNA release. Protein L1 is also a translational repressor protein, it controls the translation of the L11 operon by binding to its mRNA. This is Large ribosomal subunit protein uL1 from Prochlorococcus marinus (strain MIT 9301).